We begin with the raw amino-acid sequence, 229 residues long: 5'-methylthioadenosine/S-adenosylhomocysteine nucleosidase (229 aa).

The Proton acceptor role is filled by E12. Substrate is bound by residues G78, I152, and 173–174 (ME). D197 serves as the catalytic Proton donor.

Belongs to the PNP/UDP phosphorylase family. MtnN subfamily.

It carries out the reaction S-adenosyl-L-homocysteine + H2O = S-(5-deoxy-D-ribos-5-yl)-L-homocysteine + adenine. It catalyses the reaction S-methyl-5'-thioadenosine + H2O = 5-(methylsulfanyl)-D-ribose + adenine. The catalysed reaction is 5'-deoxyadenosine + H2O = 5-deoxy-D-ribose + adenine. It participates in amino-acid biosynthesis; L-methionine biosynthesis via salvage pathway; S-methyl-5-thio-alpha-D-ribose 1-phosphate from S-methyl-5'-thioadenosine (hydrolase route): step 1/2. In terms of biological role, catalyzes the irreversible cleavage of the glycosidic bond in both 5'-methylthioadenosine (MTA) and S-adenosylhomocysteine (SAH/AdoHcy) to adenine and the corresponding thioribose, 5'-methylthioribose and S-ribosylhomocysteine, respectively. Also cleaves 5'-deoxyadenosine, a toxic by-product of radical S-adenosylmethionine (SAM) enzymes, into 5-deoxyribose and adenine. The sequence is that of 5'-methylthioadenosine/S-adenosylhomocysteine nucleosidase from Haemophilus influenzae (strain PittEE).